Here is a 365-residue protein sequence, read N- to C-terminus: N-acetylgalactosamine-N,N'-diacetylbacillosaminyl-diphospho-undecaprenol 4-alpha-N-acetylgalactosaminyltransferase (365 aa).

This sequence belongs to the glycosyltransferase group 1 family.

The protein resides in the cell inner membrane. It carries out the reaction N-acetyl-alpha-D-galactosaminyl-(1-&gt;3)-N,N'-diacetyl-alpha-D-bacillosaminyl-tri-trans,hepta-cis-undecaprenyl diphosphate + UDP-N-acetyl-alpha-D-galactosamine = N-acetyl-alpha-D-galactosaminyl-(1-&gt;4)-N-acetyl-alpha-D-galactosaminyl-(1-&gt;3)-N,N'-diacetyl-alpha-D-bacillosaminyl-tri-trans,heptacis-undecaprenyl diphosphate + UDP + H(+). It participates in protein modification; protein glycosylation. Functionally, adds a GalNAc residue on to the Und-PP-Bac2,4diNAc-GalNAc disaccharide in the N-linked protein glycosylation pathway. Transfers the third sugar in the heptasaccharide biosynthesis. The protein is N-acetylgalactosamine-N,N'-diacetylbacillosaminyl-diphospho-undecaprenol 4-alpha-N-acetylgalactosaminyltransferase (pglJ) of Campylobacter jejuni subsp. jejuni serotype O:2 (strain ATCC 700819 / NCTC 11168).